A 427-amino-acid polypeptide reads, in one-letter code: Zinc finger protein 134 (427 aa).

A Glycyl lysine isopeptide (Lys-Gly) (interchain with G-Cter in SUMO2) cross-link involves residue Lys-20. Residues 50-72 form a C2H2-type 1 zinc finger; sequence LPCDICGPILKDILHLDEHQGTH. A C2H2-type 2; degenerate zinc finger spans residues 78–100; it reads HTCGACGRQFWFSANLHQYQKCY. Residues Lys-135 and Lys-139 each participate in a glycyl lysine isopeptide (Lys-Gly) (interchain with G-Cter in SUMO2) cross-link. 9 consecutive C2H2-type zinc fingers follow at residues 176–198, 204–226, 232–254, 260–282, 288–310, 316–338, 344–366, 372–394, and 400–422; these read YKCS…QRIH, YECS…QRIH, YECS…KRIH, YKCN…QRVH, YKCS…ESIH, YDCS…QRIH, FECI…QRVH, FVCS…QRVH, and YECS…QKVH.

It belongs to the krueppel C2H2-type zinc-finger protein family.

The protein resides in the nucleus. May be involved in transcriptional regulation. The protein is Zinc finger protein 134 (ZNF134) of Homo sapiens (Human).